A 126-amino-acid chain; its full sequence is Holo-[acyl-carrier-protein] synthase (126 aa).

2 residues coordinate Mg(2+): D9 and E58.

Belongs to the P-Pant transferase superfamily. AcpS family. Requires Mg(2+) as cofactor.

It is found in the cytoplasm. It catalyses the reaction apo-[ACP] + CoA = holo-[ACP] + adenosine 3',5'-bisphosphate + H(+). Its function is as follows. Transfers the 4'-phosphopantetheine moiety from coenzyme A to a Ser of acyl-carrier-protein. The sequence is that of Holo-[acyl-carrier-protein] synthase from Buchnera aphidicola subsp. Schizaphis graminum (strain Sg).